The primary structure comprises 94 residues: Large ribosomal subunit protein uL23 (94 aa).

The protein belongs to the universal ribosomal protein uL23 family. In terms of assembly, part of the 50S ribosomal subunit. Contacts protein L29, and trigger factor when it is bound to the ribosome.

Functionally, one of the early assembly proteins it binds 23S rRNA. One of the proteins that surrounds the polypeptide exit tunnel on the outside of the ribosome. Forms the main docking site for trigger factor binding to the ribosome. The protein is Large ribosomal subunit protein uL23 of Roseiflexus sp. (strain RS-1).